Consider the following 590-residue polypeptide: MNVQIFILLLIISWLTPKITSLPPESQVLDRSSFPDDFVFGTAISAFQSEGATSEGGKSPTIWDYFSHTFPERTNMQNADVAVDFYHRYKDDIKLIEELNVDAFRFSISWARLIPSGKVKDGVNKEGVQFYKALIDELIANGIQPSVTLYHWDHPQALEDEYGGFLNPQIIEDFRNFARVCFENFGDKVKMWTTINEPYVISVAGYDTGIKAVGRCSKWVNSRCQAGDSAIEPYIVSHHLLLSHAAAVQEFRNCNKTLQDGKIGIVISPWWLEPYDSTSSADKEAVERGLPLELEWHLNPVIYGDYPETMKKHVGNRLPAFTPEQSKMLINSSDFIGVNYYSIHFTAHLPHIDHTRPRFRTDHHFEKKLINRSNHETGPGDDRGKIHSHPEGLRRVLNYIKDKYNNPIVYVKENGIDHYDDGTKSRETILKDTFRISYHQDHLKQVHKAIIEDGCDVRGYYVWSLFDNFEWEHGYNSRFGMYYVDFKNNLQRYPKDSVNWFKKFLSRPVVRSEETEDEKVCNVSRKEEKINKALDVSEGFKTSVDSIVNLIKNGSRIEEEDDEEERDFCAFKNHNDQLGFFLKLQNSLGF.

The N-terminal stretch at 1–21 is a signal peptide; that stretch reads MNVQIFILLLIISWLTPKITS. A beta-D-glucoside-binding positions include glutamine 48, histidine 151, and 196–197; that span reads NE. Glutamate 197 acts as the Proton donor in catalysis. Cysteine 216 and cysteine 224 form a disulfide bridge. N-linked (GlcNAc...) asparagine glycans are attached at residues asparagine 255 and asparagine 331. Position 341 (tyrosine 341) interacts with a beta-D-glucoside. Residue asparagine 371 is glycosylated (N-linked (GlcNAc...) asparagine). A beta-D-glucoside-binding positions include glutamate 413, tryptophan 463, 470-471, and phenylalanine 479; that span reads EW. Residue glutamate 413 is the Nucleophile of the active site. Asparagine 522 and asparagine 553 each carry an N-linked (GlcNAc...) asparagine glycan.

It belongs to the glycosyl hydrolase 1 family.

It carries out the reaction Hydrolysis of terminal, non-reducing beta-D-glucosyl residues with release of beta-D-glucose.. The sequence is that of Beta-glucosidase 29 from Arabidopsis thaliana (Mouse-ear cress).